The sequence spans 121 residues: T cell receptor alpha variable 23/delta variable 6 (121 aa).

An N-terminal signal peptide occupies residues 1–21; sequence MDKILGASFLVLWLQLCWVSG. The Ig-like domain occupies 30–121; the sequence is QQVKQSPQSL…DSATYFCAAS (92 aa). Cys51 and Cys118 are joined by a disulfide. Asn95 is a glycosylation site (N-linked (GlcNAc...) asparagine).

As to quaternary structure, alpha-beta TR is a heterodimer composed of an alpha and beta chain; disulfide-linked. The alpha-beta TR is associated with the transmembrane signaling CD3 coreceptor proteins to form the TR-CD3 (TcR or TCR). The assembly of alpha-beta TR heterodimers with CD3 occurs in the endoplasmic reticulum where a single alpha-beta TR heterodimer associates with one CD3D-CD3E heterodimer, one CD3G-CD3E heterodimer and one CD247 homodimer forming a stable octameric structure. CD3D-CD3E and CD3G-CD3E heterodimers preferentially associate with TR alpha and TR beta chains, respectively. The association of the CD247 homodimer is the last step of TcR assembly in the endoplasmic reticulum and is required for transport to the cell surface.

It is found in the cell membrane. V region of the variable domain of T cell receptor (TR) alpha chain that participates in the antigen recognition. Alpha-beta T cell receptors are antigen specific receptors which are essential to the immune response and are present on the cell surface of T lymphocytes. Recognize peptide-major histocompatibility (MH) (pMH) complexes that are displayed by antigen presenting cells (APC), a prerequisite for efficient T cell adaptive immunity against pathogens. Binding of alpha-beta TR to pMH complex initiates TR-CD3 clustering on the cell surface and intracellular activation of LCK that phosphorylates the ITAM motifs of CD3G, CD3D, CD3E and CD247 enabling the recruitment of ZAP70. In turn ZAP70 phosphorylates LAT, which recruits numerous signaling molecules to form the LAT signalosome. The LAT signalosome propagates signal branching to three major signaling pathways, the calcium, the mitogen-activated protein kinase (MAPK) kinase and the nuclear factor NF-kappa-B (NF-kB) pathways, leading to the mobilization of transcription factors that are critical for gene expression and essential for T cell growth and differentiation. The T cell repertoire is generated in the thymus, by V-(D)-J rearrangement. This repertoire is then shaped by intrathymic selection events to generate a peripheral T cell pool of self-MH restricted, non-autoaggressive T cells. Post-thymic interaction of alpha-beta TR with the pMH complexes shapes TR structural and functional avidity. This Homo sapiens (Human) protein is T cell receptor alpha variable 23/delta variable 6.